A 245-amino-acid polypeptide reads, in one-letter code: 3-deoxy-manno-octulosonate cytidylyltransferase (245 aa).

It belongs to the KdsB family.

Its subcellular location is the cytoplasm. It catalyses the reaction 3-deoxy-alpha-D-manno-oct-2-ulosonate + CTP = CMP-3-deoxy-beta-D-manno-octulosonate + diphosphate. Its pathway is nucleotide-sugar biosynthesis; CMP-3-deoxy-D-manno-octulosonate biosynthesis; CMP-3-deoxy-D-manno-octulosonate from 3-deoxy-D-manno-octulosonate and CTP: step 1/1. It participates in bacterial outer membrane biogenesis; lipopolysaccharide biosynthesis. Functionally, activates KDO (a required 8-carbon sugar) for incorporation into bacterial lipopolysaccharide in Gram-negative bacteria. This Acaryochloris marina (strain MBIC 11017) protein is 3-deoxy-manno-octulosonate cytidylyltransferase.